A 547-amino-acid chain; its full sequence is Natural resistance-associated macrophage protein 1 (547 aa).

The segment at M1–P30 is disordered. The Cytoplasmic portion of the chain corresponds to M1–K54. A compositionally biased stretch (polar residues) spans Q8–S17. The span at P21–P30 shows a compositional bias: low complexity. The chain crosses the membrane as a helical span at residues L55–I75. Residues E76–A81 are Extracellular-facing. The chain crosses the membrane as a helical span at residues G82–L102. The Cytoplasmic portion of the chain corresponds to C103 to E139. The chain crosses the membrane as a helical span at residues L140–L160. Over S161 to R164 the chain is Extracellular. The chain crosses the membrane as a helical span at residues I165–D185. At N186–E193 the chain is on the cytoplasmic side. The chain crosses the membrane as a helical span at residues A194–A214. Over R215 to Q240 the chain is Extracellular. Residues A241–V261 form a helical membrane-spanning segment. The Cytoplasmic portion of the chain corresponds to K262–S286. Residues I287 to F307 form a helical membrane-spanning segment. Over Y308–G346 the chain is Extracellular. 2 N-linked (GlcNAc...) asparagine glycosylation sites follow: N321 and N335. A helical membrane pass occupies residues V347 to A367. Over A368 to R394 the chain is Cytoplasmic. Residues F395 to F415 form a helical membrane-spanning segment. Over R416–Q432 the chain is Extracellular. The chain crosses the membrane as a helical span at residues S433–M453. Residues Q454–A464 are Cytoplasmic-facing. Residues I465–L485 form a helical membrane-spanning segment. Residues P486 to A492 lie on the Extracellular side of the membrane. The helical transmembrane segment at Y493–W513 threads the bilayer. Residues T514–G547 lie on the Cytoplasmic side of the membrane.

It belongs to the NRAMP family.

It localises to the late endosome membrane. Its subcellular location is the lysosome membrane. It carries out the reaction Zn(2+)(in) + H(+)(out) = Zn(2+)(out) + H(+)(in). The catalysed reaction is Fe(2+)(in) + H(+)(out) = Fe(2+)(out) + H(+)(in). It catalyses the reaction Mn(2+)(in) + H(+)(out) = Mn(2+)(out) + H(+)(in). Functionally, macrophage-specific antiporter that fluxes metal ions in either direction against a proton gradient. Localized to late endosomal lysosomal membranes, delivers bivalent cations from the cytosol into these acidic compartments where they may directly affect antimicrobial activity. Involved in iron metabolism and host natural resistance to infection with intracellular parasites. Pathogen resistance involves sequestration of Fe(2+) and Mn(2+), cofactors of both prokaryotic and eukaryotic catalases and superoxide dismutases, not only to protect the macrophage against its own generation of reactive oxygen species, but to deny the cations to the pathogen for synthesis of its protective enzymes. This Canis lupus familiaris (Dog) protein is Natural resistance-associated macrophage protein 1 (SLC11A1).